A 428-amino-acid polypeptide reads, in one-letter code: C4-dicarboxylate transport protein (428 aa).

A run of 9 helical transmembrane segments spans residues 4–24 (SLFK…ILLG), 44–64 (LIKM…IAGM), 76–96 (VALL…LIIV), 142–162 (IGAF…LFGF), 184–204 (VIFG…FGAM), 222–242 (LIIC…GTIA), 289–309 (VVGL…SIYL), 326–346 (IFHQ…AAGV), and 352–372 (IVLA…LALI).

This sequence belongs to the dicarboxylate/amino acid:cation symporter (DAACS) (TC 2.A.23) family.

The protein localises to the cell inner membrane. Responsible for the transport of dicarboxylates such as succinate, fumarate, and malate from the periplasm across the membrane. The sequence is that of C4-dicarboxylate transport protein from Salmonella arizonae (strain ATCC BAA-731 / CDC346-86 / RSK2980).